Reading from the N-terminus, the 422-residue chain is L-threonine dehydratase biosynthetic IlvA (422 aa).

K56 carries the N6-(pyridoxal phosphate)lysine modification. Residues N83, 189–193 (GGGGL), and S315 contribute to the pyridoxal 5'-phosphate site. In terms of domain architecture, ACT-like spans 339–413 (HYFILNFPQR…FDPSNIYINE (75 aa)).

This sequence belongs to the serine/threonine dehydratase family. Homotetramer. It depends on pyridoxal 5'-phosphate as a cofactor.

It carries out the reaction L-threonine = 2-oxobutanoate + NH4(+). The protein operates within amino-acid biosynthesis; L-isoleucine biosynthesis; 2-oxobutanoate from L-threonine: step 1/1. Its function is as follows. Catalyzes the anaerobic formation of alpha-ketobutyrate and ammonia from threonine in a two-step reaction. The first step involved a dehydration of threonine and a production of enamine intermediates (aminocrotonate), which tautomerizes to its imine form (iminobutyrate). Both intermediates are unstable and short-lived. The second step is the nonenzymatic hydrolysis of the enamine/imine intermediates to form 2-ketobutyrate and free ammonia. In the low water environment of the cell, the second step is accelerated by RidA. This Staphylococcus epidermidis (strain ATCC 12228 / FDA PCI 1200) protein is L-threonine dehydratase biosynthetic IlvA (ilvA).